Reading from the N-terminus, the 333-residue chain is tRNA-dihydrouridine(16) synthase (333 aa).

FMN-binding positions include 19–21 (PMQ) and Gln80. Cys110 acts as the Proton donor in catalysis. FMN is bound by residues Lys151, 211–213 (NGD), and 235–236 (GR).

It belongs to the Dus family. DusC subfamily. FMN serves as cofactor.

The enzyme catalyses 5,6-dihydrouridine(16) in tRNA + NADP(+) = uridine(16) in tRNA + NADPH + H(+). It catalyses the reaction 5,6-dihydrouridine(16) in tRNA + NAD(+) = uridine(16) in tRNA + NADH + H(+). Functionally, catalyzes the synthesis of 5,6-dihydrouridine (D), a modified base found in the D-loop of most tRNAs, via the reduction of the C5-C6 double bond in target uridines. Specifically modifies U16 in tRNAs. This chain is tRNA-dihydrouridine(16) synthase, found in Neisseria meningitidis serogroup B (strain ATCC BAA-335 / MC58).